A 345-amino-acid chain; its full sequence is 4-hydroxy-2-oxovalerate aldolase 3 (345 aa).

A Pyruvate carboxyltransferase domain is found at 8–260; it reads ITVHDMTLRD…ETGVDVWKIQ (253 aa). 16–17 is a binding site for substrate; that stretch reads RD. Mn(2+) is bound at residue aspartate 17. Histidine 20 (proton acceptor) is an active-site residue. Substrate is bound by residues serine 170 and histidine 199. Residues histidine 199 and histidine 201 each contribute to the Mn(2+) site. Substrate is bound at residue tyrosine 290.

Belongs to the 4-hydroxy-2-oxovalerate aldolase family.

The enzyme catalyses (S)-4-hydroxy-2-oxopentanoate = acetaldehyde + pyruvate. This is 4-hydroxy-2-oxovalerate aldolase 3 (aphG) from Comamonas testosteroni (Pseudomonas testosteroni).